The primary structure comprises 39 residues: uncharacterized protein (39 aa).

The span at 1–16 (MLNIQPTQSIVNNQPK) shows a compositional bias: polar residues. A disordered region spans residues 1–39 (MLNIQPTQSIVNNQPKSDQKKQKPADLLKEFYDKTGNRN). Residues 17 to 39 (SDQKKQKPADLLKEFYDKTGNRN) are compositionally biased toward basic and acidic residues.

This is an uncharacterized protein from Dictyostelium discoideum (Social amoeba).